The chain runs to 151 residues: Superoxide dismutase [Cu-Zn] (151 aa).

A lipid anchor (S-palmitoyl cysteine) is attached at cysteine 6. Residues histidine 45, histidine 47, and histidine 62 each coordinate Cu cation. Cysteine 56 and cysteine 144 are oxidised to a cystine. Zn(2+) contacts are provided by histidine 62, histidine 70, histidine 79, and aspartate 82. Residue histidine 118 coordinates Cu cation.

The protein belongs to the Cu-Zn superoxide dismutase family. As to quaternary structure, homodimer. The cofactor is Cu cation. Requires Zn(2+) as cofactor.

It localises to the cytoplasm. Its subcellular location is the nucleus. It carries out the reaction 2 superoxide + 2 H(+) = H2O2 + O2. Functionally, destroys radicals which are normally produced within the cells and which are toxic to biological systems. The protein is Superoxide dismutase [Cu-Zn] (sod1) of Xenopus tropicalis (Western clawed frog).